The chain runs to 119 residues: NADH dehydrogenase [ubiquinone] 1 subunit C2 (119 aa).

The chain crosses the membrane as a helical span at residues 56 to 75; the sequence is GLHRQLLYITAFFFAGYYLV.

It belongs to the complex I NDUFC2 subunit family. Complex I is composed of 45 different subunits. Interacts with TMEM242.

It is found in the mitochondrion inner membrane. Its function is as follows. Accessory subunit of the mitochondrial membrane respiratory chain NADH dehydrogenase (Complex I), that is believed not to be involved in catalysis but required for the complex assembly. Complex I functions in the transfer of electrons from NADH to the respiratory chain. The immediate electron acceptor for the enzyme is believed to be ubiquinone. The protein is NADH dehydrogenase [ubiquinone] 1 subunit C2 of Gorilla gorilla gorilla (Western lowland gorilla).